A 185-amino-acid chain; its full sequence is MSCISEIGKFVKSIEYIKLPCLFIFAAIVGMNLSLLYCLLKGWKNVMIWGIETMLFGAIGIFFAWKKKLSWEHLVLLWSTIDAFFSMCLRSCTIIYFSMNPYMLCEILNARNVISCSLNTQKFFFIIVAASNVYSIFQLCGCLLMFNNIISIRPSERTEPEFNFDLEKGVAFASDSEFPEKSICI.

This is Meiotic expression up-regulated protein 31 (meu31) from Schizosaccharomyces pombe (strain 972 / ATCC 24843) (Fission yeast).